A 461-amino-acid polypeptide reads, in one-letter code: Photosystem II CP43 reaction center protein (461 aa).

The propeptide occupies 1–2 (ME). An N-acetylthreonine modification is found at threonine 3. Phosphothreonine is present on threonine 3. 5 consecutive transmembrane segments (helical) span residues 57–81 (LFEV…PHLA), 122–143 (LIGP…KDKN), 166–188 (KALY…RIIT), 243–263 (QPWA…LSYS), and 279–300 (WFNN…ASQS). Glutamate 355 contacts [CaMn4O5] cluster. Residues 435-459 (RARAAAAGFEKGIDRFNEPTLSLRP) traverse the membrane as a helical segment.

This sequence belongs to the PsbB/PsbC family. PsbC subfamily. As to quaternary structure, PSII is composed of 1 copy each of membrane proteins PsbA, PsbB, PsbC, PsbD, PsbE, PsbF, PsbH, PsbI, PsbJ, PsbK, PsbL, PsbM, PsbT, PsbX, PsbY, PsbZ, Psb30/Ycf12, at least 3 peripheral proteins of the oxygen-evolving complex and a large number of cofactors. It forms dimeric complexes. Binds multiple chlorophylls and provides some of the ligands for the Ca-4Mn-5O cluster of the oxygen-evolving complex. It may also provide a ligand for a Cl- that is required for oxygen evolution. PSII binds additional chlorophylls, carotenoids and specific lipids. is required as a cofactor.

Its subcellular location is the plastid. The protein localises to the chloroplast thylakoid membrane. Its function is as follows. One of the components of the core complex of photosystem II (PSII). It binds chlorophyll and helps catalyze the primary light-induced photochemical processes of PSII. PSII is a light-driven water:plastoquinone oxidoreductase, using light energy to abstract electrons from H(2)O, generating O(2) and a proton gradient subsequently used for ATP formation. This Oedogonium cardiacum (Filamentous green alga) protein is Photosystem II CP43 reaction center protein.